Reading from the N-terminus, the 503-residue chain is ATP synthase subunit alpha (503 aa).

170-177 lines the ATP pocket; the sequence is GDRQTGKT.

Belongs to the ATPase alpha/beta chains family. In terms of assembly, F-type ATPases have 2 components, CF(1) - the catalytic core - and CF(0) - the membrane proton channel. CF(1) has five subunits: alpha(3), beta(3), gamma(1), delta(1), epsilon(1). CF(0) has three main subunits: a(1), b(2) and c(9-12). The alpha and beta chains form an alternating ring which encloses part of the gamma chain. CF(1) is attached to CF(0) by a central stalk formed by the gamma and epsilon chains, while a peripheral stalk is formed by the delta and b chains.

Its subcellular location is the cell membrane. It catalyses the reaction ATP + H2O + 4 H(+)(in) = ADP + phosphate + 5 H(+)(out). Functionally, produces ATP from ADP in the presence of a proton gradient across the membrane. The alpha chain is a regulatory subunit. This Brevibacillus brevis (strain 47 / JCM 6285 / NBRC 100599) protein is ATP synthase subunit alpha.